The primary structure comprises 99 residues: NADH-quinone oxidoreductase subunit K (99 aa).

The next 3 helical transmembrane spans lie at 3–23, 28–48, and 62–82; these read PMYY…GVLL, IIVF…LVTF, and FFVM…IVAI.

The protein belongs to the complex I subunit 4L family. NDH-1 is composed of 14 different subunits. Subunits NuoA, H, J, K, L, M, N constitute the membrane sector of the complex.

The protein resides in the cell membrane. It catalyses the reaction a quinone + NADH + 5 H(+)(in) = a quinol + NAD(+) + 4 H(+)(out). NDH-1 shuttles electrons from NADH, via FMN and iron-sulfur (Fe-S) centers, to quinones in the respiratory chain. The immediate electron acceptor for the enzyme in this species is believed to be a menaquinone. Couples the redox reaction to proton translocation (for every two electrons transferred, four hydrogen ions are translocated across the cytoplasmic membrane), and thus conserves the redox energy in a proton gradient. The sequence is that of NADH-quinone oxidoreductase subunit K from Acidothermus cellulolyticus (strain ATCC 43068 / DSM 8971 / 11B).